A 469-amino-acid chain; its full sequence is Exodeoxyribonuclease 7 large subunit (469 aa).

This sequence belongs to the XseA family. In terms of assembly, heterooligomer composed of large and small subunits.

Its subcellular location is the cytoplasm. The catalysed reaction is Exonucleolytic cleavage in either 5'- to 3'- or 3'- to 5'-direction to yield nucleoside 5'-phosphates.. Bidirectionally degrades single-stranded DNA into large acid-insoluble oligonucleotides, which are then degraded further into small acid-soluble oligonucleotides. This Mycoplasma mycoides subsp. mycoides SC (strain CCUG 32753 / NCTC 10114 / PG1) protein is Exodeoxyribonuclease 7 large subunit.